Here is a 473-residue protein sequence, read N- to C-terminus: MKRASSGGSRLLAWVLWLQAWRVATPCPGACVCYNEPKVTTSCPQQGLQAVPTGIPASSQRIFLHGNRISHVPAASFQSCRNLTILWLHSNALARIDAAAFTGLTLLEQLDLSDNAQLHVVDPTTFHGLGHLHTLHLDRCGLRELGPGLFRGLAALQYLYLQDNNLQALPDNTFRDLGNLTHLFLHGNRIPSVPEHAFRGLHSLDRLLLHQNHVARVHPHAFRDLGRLMTLYLFANNLSMLPAEVLMPLRSLQYLRLNDNPWVCDCRARPLWAWLQKFRGSSSEVPCNLPQRLADRDLKRLAASDLEGCAVASGPFRPIQTSQLTDEELLSLPKCCQPDAADKASVLEPGRPASAGNALKGRVPPGDTPPGNGSGPRHINDSPFGTLPSSAEPPLTALRPGGSEPPGLPTTGPRRRPGCSRKNRTRSHCRLGQAGSGASGTGDAEGSGALPALACSLAPLGLALVLWTVLGPC.

The signal sequence occupies residues 1–26 (MKRASSGGSRLLAWVLWLQAWRVATP). Cystine bridges form between cysteine 27/cysteine 33 and cysteine 31/cysteine 43. Residues 27 to 57 (CPGACVCYNEPKVTTSCPQQGLQAVPTGIPA) enclose the LRRNT domain. 8 LRR repeats span residues 58–79 (SSQR…SFQS), 82–103 (NLTI…AFTG), 106–128 (LLEQ…TFHG), 131–152 (HLHT…LFRG), 155–176 (ALQY…TFRD), 179–200 (NLTH…AFRG), 203–224 (SLDR…AFRD), and 227–248 (RLMT…VLMP). N-linked (GlcNAc...) asparagine glycosylation occurs at asparagine 82. The N-linked (GlcNAc...) asparagine glycan is linked to asparagine 179. Residues 260–311 (NPWVCDCRARPLWAWLQKFRGSSSEVPCNLPQRLADRDLKRLAASDLEGCAV) enclose the LRRCT domain. 3 cysteine pairs are disulfide-bonded: cysteine 264–cysteine 287, cysteine 266–cysteine 335, and cysteine 309–cysteine 336. The segment at 346–446 (VLEPGRPASA…GASGTGDAEG (101 aa)) is disordered. The N-linked (GlcNAc...) asparagine glycan is linked to asparagine 372. Residues 413-429 (PRRRPGCSRKNRTRSHC) are compositionally biased toward basic residues. Residues 434-445 (AGSGASGTGDAE) are compositionally biased toward gly residues. Serine 447 carries GPI-anchor amidated serine lipidation. Positions 448–473 (GALPALACSLAPLGLALVLWTVLGPC) are cleaved as a propeptide — removed in mature form.

This sequence belongs to the Nogo receptor family. Homodimer. Interacts with MAG. Interacts with RTN4. Interacts with NGFR. Interacts with LINGO1. Interacts with KIAA0319L. Interacts with OLFM1; this inhibits interaction with LINGO1 and NGFR. Interacts with OMG. In terms of processing, N-glycosylated. O-glycosylated. Contains terminal sialic acid groups on its glycan chains. In terms of tissue distribution, detected in embryonic hippocampus neurons. Detected in brain (at protein level). Detected in neurons in the neocortex, in hippocampus, dorsal thalamus, cerebellum granule cell layer and the mitral cell layer in the olfactory bulb. Detected in brain, dorsal root ganglion and heart.

It localises to the cell membrane. It is found in the membrane raft. The protein localises to the cell projection. Its subcellular location is the dendrite. The protein resides in the axon. It localises to the perikaryon. Receptor for RTN4, OMG and MAG. Functions as a receptor for the sialylated gangliosides GT1b and GM1. Besides, functions as a receptor for chondroitin sulfate proteoglycans. Can also bind heparin. Intracellular signaling cascades are triggered via the coreceptor NGFR. Signaling mediates activation of Rho and downstream reorganization of the actin cytoskeleton. Mediates axonal growth inhibition. Mediates axonal growth inhibition and plays a role in regulating axon regeneration and neuronal plasticity in the adult central nervous system. Plays a role in postnatal brain development. Required for normal axon migration across the brain midline and normal formation of the corpus callosum. Protects motoneurons against apoptosis; protection against apoptosis is probably mediated via interaction with MAG. Acts in conjunction with RTN4 and LINGO1 in regulating neuronal precursor cell motility during cortical development. Like other family members, plays a role in restricting the number dendritic spines and the number of synapses that are formed during brain development. The chain is Reticulon-4 receptor (Rtn4r) from Mus musculus (Mouse).